The following is a 341-amino-acid chain: Biotin synthase (341 aa).

The Radical SAM core domain maps to Ala56–Arg285. The [4Fe-4S] cluster site is built by Cys71, Cys75, and Cys78. Residues Cys116, Cys148, Cys208, and Arg280 each contribute to the [2Fe-2S] cluster site.

This sequence belongs to the radical SAM superfamily. Biotin synthase family. In terms of assembly, homodimer. It depends on [4Fe-4S] cluster as a cofactor. [2Fe-2S] cluster serves as cofactor.

The enzyme catalyses (4R,5S)-dethiobiotin + (sulfur carrier)-SH + 2 reduced [2Fe-2S]-[ferredoxin] + 2 S-adenosyl-L-methionine = (sulfur carrier)-H + biotin + 2 5'-deoxyadenosine + 2 L-methionine + 2 oxidized [2Fe-2S]-[ferredoxin]. Its pathway is cofactor biosynthesis; biotin biosynthesis; biotin from 7,8-diaminononanoate: step 2/2. Its function is as follows. Catalyzes the conversion of dethiobiotin (DTB) to biotin by the insertion of a sulfur atom into dethiobiotin via a radical-based mechanism. The chain is Biotin synthase from Methylorubrum populi (strain ATCC BAA-705 / NCIMB 13946 / BJ001) (Methylobacterium populi).